The following is a 65-amino-acid chain: Conotoxin mr5.1b (65 aa).

The first 19 residues, 1–19, serve as a signal peptide directing secretion; sequence MRCVPVFVILLLLIASAPS. A propeptide spanning residues 20-48 is cleaved from the precursor; the sequence is VDARLKTKDDMPLPSSHANIKRTLQMLRN. The residue at position 60 (E60) is a 4-carboxyglutamate.

This sequence belongs to the conotoxin T superfamily. Post-translationally, contains 2 disulfide bonds that can be either 'C1-C3, C2-C4' or 'C1-C4, C2-C3', since these disulfide connectivities have been observed for conotoxins with cysteine framework V (for examples, see AC P0DQQ7 and AC P81755). Expressed by the venom duct.

It localises to the secreted. The sequence is that of Conotoxin mr5.1b from Conus marmoreus (Marble cone).